The following is a 302-amino-acid chain: MIVDQNVAFAPAKINLYLHVTGRRSDGYHLLDSLAVFAEACDVLRYRDGDQAAGLGLQLEGPGAETLRAEPDNLVLRAGRALAALAGIKPRGTIMLDKRLPVASGIGGGSSDAAAALRLLSRVWGVSPAAEDLHRIATSLGADVPVCLEPGTYRMRGIGERLEALPAMPEIGLLLANPGVPVSTPEVFRNREHGFTPEATLASRWPDMAALLRDLQLSRNDLQPPAMRLCPAIGILLHALEGLPGARLTRMSGSGATCFTLFDHPDAARDAAQLLQAQSGMGGWCWGGGLYKTASALDKTTL.

Lys-13 is a catalytic residue. ATP is bound at residue 101–111 (PVASGIGGGSS). Residue Asp-143 is part of the active site.

It belongs to the GHMP kinase family. IspE subfamily.

The catalysed reaction is 4-CDP-2-C-methyl-D-erythritol + ATP = 4-CDP-2-C-methyl-D-erythritol 2-phosphate + ADP + H(+). It functions in the pathway isoprenoid biosynthesis; isopentenyl diphosphate biosynthesis via DXP pathway; isopentenyl diphosphate from 1-deoxy-D-xylulose 5-phosphate: step 3/6. Catalyzes the phosphorylation of the position 2 hydroxy group of 4-diphosphocytidyl-2C-methyl-D-erythritol. The chain is 4-diphosphocytidyl-2-C-methyl-D-erythritol kinase from Granulibacter bethesdensis (strain ATCC BAA-1260 / CGDNIH1).